Reading from the N-terminus, the 421-residue chain is Succinate--CoA ligase [ADP-forming] subunit beta, mitochondrial (421 aa).

The transit peptide at 1-26 (MRGLVNKLVSRSLSISGKWQNQQLRR) directs the protein to the mitochondrion. The region spanning 35–278 (AELMGKYGVN…PTQEDPREVA (244 aa)) is the ATP-grasp domain. Residues Lys-74, 81–83 (GRG), and Glu-141 contribute to the ATP site. Mg(2+)-binding residues include Asn-233 and Asp-247. Residues Asn-298 and 355–357 (GIM) each bind substrate.

Belongs to the succinate/malate CoA ligase beta subunit family. Heterodimer of an alpha and a beta subunit. Mg(2+) serves as cofactor.

Its subcellular location is the mitochondrion. The catalysed reaction is succinate + ATP + CoA = succinyl-CoA + ADP + phosphate. The protein operates within carbohydrate metabolism; tricarboxylic acid cycle; succinate from succinyl-CoA (ligase route): step 1/1. Succinyl-CoA synthetase functions in the citric acid cycle (TCA), coupling the hydrolysis of succinyl-CoA to the synthesis of ATP and thus represents the only step of substrate-level phosphorylation in the TCA. The beta subunit provides nucleotide specificity of the enzyme and binds the substrate succinate, while the binding sites for coenzyme A and phosphate are found in the alpha subunit. In Arabidopsis thaliana (Mouse-ear cress), this protein is Succinate--CoA ligase [ADP-forming] subunit beta, mitochondrial.